A 307-amino-acid chain; its full sequence is HPr kinase/phosphorylase (307 aa).

Residues His-136 and Lys-157 contribute to the active site. 151–158 (GESGIGKS) serves as a coordination point for ATP. Mg(2+) is bound at residue Ser-158. The Proton acceptor; for phosphorylation activity. Proton donor; for dephosphorylation activity role is filled by Asp-175. Residues 198 to 207 (LEVRGMGIID) are important for the catalytic mechanism of both phosphorylation and dephosphorylation. Glu-199 is a binding site for Mg(2+). Residue Arg-240 is part of the active site. Residues 261–266 (PIRPGR) are important for the catalytic mechanism of dephosphorylation.

The protein belongs to the HPrK/P family. Homohexamer. It depends on Mg(2+) as a cofactor.

It catalyses the reaction [HPr protein]-L-serine + ATP = [HPr protein]-O-phospho-L-serine + ADP + H(+). The enzyme catalyses [HPr protein]-O-phospho-L-serine + phosphate + H(+) = [HPr protein]-L-serine + diphosphate. In terms of biological role, catalyzes the ATP- as well as the pyrophosphate-dependent phosphorylation of a specific serine residue in HPr, a phosphocarrier protein of the phosphoenolpyruvate-dependent sugar phosphotransferase system (PTS). HprK/P also catalyzes the pyrophosphate-producing, inorganic phosphate-dependent dephosphorylation (phosphorolysis) of seryl-phosphorylated HPr (P-Ser-HPr). The two antagonistic activities of HprK/P are regulated by several intracellular metabolites, which change their concentration in response to the absence or presence of rapidly metabolisable carbon sources (glucose, fructose, etc.) in the growth medium. Therefore, by controlling the phosphorylation state of HPr, HPrK/P is a sensor enzyme that plays a major role in the regulation of carbon metabolism and sugar transport: it mediates carbon catabolite repression (CCR), and regulates PTS-catalyzed carbohydrate uptake and inducer exclusion. This chain is HPr kinase/phosphorylase, found in Clostridium perfringens (strain ATCC 13124 / DSM 756 / JCM 1290 / NCIMB 6125 / NCTC 8237 / Type A).